The chain runs to 311 residues: N-acetylmuramic acid 6-phosphate etherase (311 aa).

The SIS domain maps to 66–229 (VAVRMARGGR…STITMIRLGK (164 aa)). E94 (proton donor) is an active-site residue. The active site involves E125.

Belongs to the GCKR-like family. MurNAc-6-P etherase subfamily. As to quaternary structure, homodimer.

It carries out the reaction N-acetyl-D-muramate 6-phosphate + H2O = N-acetyl-D-glucosamine 6-phosphate + (R)-lactate. Its pathway is amino-sugar metabolism; N-acetylmuramate degradation. Its function is as follows. Specifically catalyzes the cleavage of the D-lactyl ether substituent of MurNAc 6-phosphate, producing GlcNAc 6-phosphate and D-lactate. This is N-acetylmuramic acid 6-phosphate etherase from Streptomyces coelicolor (strain ATCC BAA-471 / A3(2) / M145).